Reading from the N-terminus, the 758-residue chain is Deoxynucleotidyltransferase terminal-interacting protein 2 (758 aa).

Over residues 1–21 (MVVTRSGLSRTRLQESSQQKR) the composition is skewed to polar residues. Positions 1 to 176 (MVVTRSGLSR…SQSGTVSDAE (176 aa)) are disordered. Residues Ser-17, Ser-133, Ser-137, and Ser-140 each carry the phosphoserine modification. Over residues 128-143 (DEVVVSEAESHVSGVS) the composition is skewed to low complexity. Polar residues predominate over residues 155 to 172 (NKANSQRDSSQESQSGTV). Phosphoserine is present on residues Ser-173 and Ser-183. Lys-210 is covalently cross-linked (Glycyl lysine isopeptide (Lys-Gly) (interchain with G-Cter in SUMO2)). A phosphoserine mark is found at Ser-229, Ser-240, Ser-248, and Ser-255. Over residues 231–255 (ATQLSARPLSQRNMPNVSDSETYNS) the composition is skewed to polar residues. Disordered stretches follow at residues 231–277 (ATQL…HQNL), 312–353 (KVIN…QLSS), 377–480 (DKRG…AEDL), and 501–552 (DKNF…DLLS). Residue Lys-317 forms a Glycyl lysine isopeptide (Lys-Gly) (interchain with G-Cter in SUMO2) linkage. Over residues 321 to 353 (RSLSEAQDTSLQQSVSQNHSSTPNKKPTFQLSS) the composition is skewed to polar residues. A phosphoserine mark is found at Ser-324 and Ser-330. Residues Lys-345 and Lys-384 each participate in a glycyl lysine isopeptide (Lys-Gly) (interchain with G-Cter in SUMO2) cross-link. Over residues 377–387 (DKRGGSGKKSD) the composition is skewed to basic and acidic residues. The span at 431–440 (LSMTQDTTDS) shows a compositional bias: polar residues. Positions 447 to 456 (SSDESQQSDS) are enriched in low complexity. Phosphoserine occurs at positions 476 and 512. Residues 512–541 (SEVAIEEEKEEEEKEEENSEEDSSDSDENK) are a coiled coil. Positions 515-550 (AIEEEKEEEEKEEENSEEDSSDSDENKDESSDEEDL) are enriched in acidic residues. The segment at 550–607 (LLSNTKSKLLKLTSSSIDPGLNIKQLGGLYINFNVDKLQPHKETLTQIKEKKKNELLQ) is tdBR region; mediates interaction with DNTT. Residues Lys-560, Lys-586, and Lys-608 each participate in a glycyl lysine isopeptide (Lys-Gly) (interchain with G-Cter in SUMO2) cross-link. At Thr-612 the chain carries Phosphothreonine. The tract at residues 621-647 (VPPYSESKHRLQKQRRKERQKTAGNGW) is disordered. A Glycyl lysine isopeptide (Lys-Gly) (interchain with G-Cter in SUMO2) cross-link involves residue Lys-628. The span at 630-639 (RLQKQRRKER) shows a compositional bias: basic residues. Residues Lys-651, Lys-660, Lys-688, and Lys-733 each participate in a glycyl lysine isopeptide (Lys-Gly) (interchain with G-Cter in SUMO2) cross-link.

As to quaternary structure, forms a ternary complex with DNTT and core histone; interaction with PCNA releases DNTT and H2A/H2B histones from this ternary complex. Interacts with ESR1, ESR2, PPARG and RXRA. Part of the small subunit (SSU) processome, composed of more than 70 proteins and the RNA chaperone small nucleolar RNA (snoRNA) U3.

The protein localises to the nucleus. It localises to the nucleolus. Its function is as follows. Regulates the transcriptional activity of DNTT and ESR1. May function as a chromatin remodeling protein. Part of the small subunit (SSU) processome, first precursor of the small eukaryotic ribosomal subunit. During the assembly of the SSU processome in the nucleolus, many ribosome biogenesis factors, an RNA chaperone and ribosomal proteins associate with the nascent pre-rRNA and work in concert to generate RNA folding, modifications, rearrangements and cleavage as well as targeted degradation of pre-ribosomal RNA by the RNA exosome. The protein is Deoxynucleotidyltransferase terminal-interacting protein 2 (Dnttip2) of Mus musculus (Mouse).